Consider the following 355-residue polypeptide: NADH-quinone oxidoreductase subunit H (355 aa).

Helical transmembrane passes span 25–45 (VVRILVVSVVILLCVAYLILW), 91–111 (WLYLIAPIMTVVPAFAVWAVI), 126–146 (LLYAMAISSIGVYAVILAGWA), 170–190 (MGFALVLVLMTAGSLNLSEIV), 205–225 (FLSWNWLPLLPAFVVYFISGI), 253–273 (MAFALFFLAEYINMIVISALA), 290–310 (FIPGIFWLVLKVFALLSVFIW), and 330–350 (VFLPVTVIWVVVVGCWMMSPL).

The protein belongs to the complex I subunit 1 family. NDH-1 is composed of 14 different subunits. Subunits NuoA, H, J, K, L, M, N constitute the membrane sector of the complex.

Its subcellular location is the cell inner membrane. It carries out the reaction a quinone + NADH + 5 H(+)(in) = a quinol + NAD(+) + 4 H(+)(out). NDH-1 shuttles electrons from NADH, via FMN and iron-sulfur (Fe-S) centers, to quinones in the respiratory chain. The immediate electron acceptor for the enzyme in this species is believed to be ubiquinone. Couples the redox reaction to proton translocation (for every two electrons transferred, four hydrogen ions are translocated across the cytoplasmic membrane), and thus conserves the redox energy in a proton gradient. This subunit may bind ubiquinone. The chain is NADH-quinone oxidoreductase subunit H from Burkholderia cenocepacia (strain ATCC BAA-245 / DSM 16553 / LMG 16656 / NCTC 13227 / J2315 / CF5610) (Burkholderia cepacia (strain J2315)).